We begin with the raw amino-acid sequence, 504 residues long: Cytochrome P450 6a9 (504 aa).

Heme is bound at residue C449.

This sequence belongs to the cytochrome P450 family. Heme serves as cofactor.

It is found in the endoplasmic reticulum membrane. The protein localises to the microsome membrane. Involved in the metabolism of insect hormones and in the breakdown of synthetic insecticides. The sequence is that of Cytochrome P450 6a9 (Cyp6a9) from Drosophila melanogaster (Fruit fly).